Consider the following 286-residue polypeptide: ATP synthase gamma chain (286 aa).

The protein belongs to the ATPase gamma chain family. In terms of assembly, F-type ATPases have 2 components, CF(1) - the catalytic core - and CF(0) - the membrane proton channel. CF(1) has five subunits: alpha(3), beta(3), gamma(1), delta(1), epsilon(1). CF(0) has three main subunits: a, b and c.

The protein localises to the cell inner membrane. Produces ATP from ADP in the presence of a proton gradient across the membrane. The gamma chain is believed to be important in regulating ATPase activity and the flow of protons through the CF(0) complex. This Pseudomonas putida (strain W619) protein is ATP synthase gamma chain.